A 337-amino-acid polypeptide reads, in one-letter code: 4-hydroxy-2-oxovalerate aldolase (337 aa).

Residues 6 to 256 (IRIMDTTLRD…ETGIDLFQIM (251 aa)) enclose the Pyruvate carboxyltransferase domain. Substrate is bound at residue 14 to 15 (RD). A Mn(2+)-binding site is contributed by D15. H18 functions as the Proton acceptor in the catalytic mechanism. Substrate is bound by residues S168 and H195. 2 residues coordinate Mn(2+): H195 and H197. Y286 serves as a coordination point for substrate.

Belongs to the 4-hydroxy-2-oxovalerate aldolase family.

It carries out the reaction (S)-4-hydroxy-2-oxopentanoate = acetaldehyde + pyruvate. In Geobacillus genomosp. 3, this protein is 4-hydroxy-2-oxovalerate aldolase (nahM).